Reading from the N-terminus, the 269-residue chain is MRVALKLAYIGTEFHGSQIQPNVETVEKELFKALRNLSIIESPKSADYTCAGRTDAGVHALGQVVAFDTEKPNLAIPRVINSELPPAIWAWAHAEVPYYFDARRSAVSRHYHYVMSGEDYDISKMREASKLLLGTHDFENFSRSNGEKSTVRTLERINVRVDGEITKIDVVGNSFLWNMVRKIVTALSMIGNGVRDNDWLLQMLNPEIYEEGIEPAPPYGLTLMGVNYGENIEWIEDDYSIRRAGEQNHKRILRHRVMAEVLEELISHE.

The active-site Nucleophile is Asp55. Tyr111 lines the substrate pocket.

This sequence belongs to the tRNA pseudouridine synthase TruA family.

The enzyme catalyses uridine(38/39/40) in tRNA = pseudouridine(38/39/40) in tRNA. Its function is as follows. Formation of pseudouridine at positions 38, 39 and 40 in the anticodon stem and loop of transfer RNAs. This is tRNA pseudouridine synthase A from Methanosarcina acetivorans (strain ATCC 35395 / DSM 2834 / JCM 12185 / C2A).